Reading from the N-terminus, the 60-residue chain is Small ribosomal subunit protein bS21 (60 aa).

The segment at 36–60 (QFFETPQEKHKRKEATRRRQRSRRR) is disordered. Positions 44–60 (KHKRKEATRRRQRSRRR) are enriched in basic residues.

It belongs to the bacterial ribosomal protein bS21 family.

The sequence is that of Small ribosomal subunit protein bS21 (rpsU) from Synechocystis sp. (strain ATCC 27184 / PCC 6803 / Kazusa).